A 28-amino-acid chain; its full sequence is uncharacterized protein (28 aa).

Residues 5 to 27 (SAFHACNIIFLPLVKCASATIML) traverse the membrane as a helical segment.

It is found in the membrane. This is an uncharacterized protein from Saccharomyces cerevisiae (strain ATCC 204508 / S288c) (Baker's yeast).